The chain runs to 612 residues: MSAELIAVYKDEQIIDLESAKVLGLSDGIKALNGTEPIYFDDSPLALEVIRHSCAHLLAQSLKALYPDAKFFVGPVVEEGFYYDFKTSSKISEEDLPKIEAKMKEFAKLKLAITKETLTREQALERFKGDELKHAVMSKIGGDAFGVYQQGEFEDLCKGPHLPNTRFLNHFKLTKLAGAYLGGDENNEMLIRIYGIAFATKEGLKDYLFQIEEAKKRDHRKLGVELGLFSFDDEIGAGLPLWLPKGARLRKRIEDLLSQALLLRGYEPVKGPEILKSDVWKISGHYDNYKENMYFTTIDEQEYGIKPMNCVGHIKVYQSALHSYRDLPLRFYEYGVVHRHEKSGVLHGLLRVREFTQDDAHIFCSFEQIQSEVSAILDFTHKIMQAFDFSYEMELSTRPAKSIGDDKVWEKATNALKEALKEHRIDYKIDEGGGAFYGPKIDIKITDALKRKWQCGTIQVDMNLPERFKLAFTNEYNHAEQPVMIHRAILGSFERFIAILSEHFGGNFPFFVAPTQIALIPINEEHHVFALKLKEALKKRDIFVEVLDKNDSLNKKVRLAEKQKIPMILVLGNEEVETEILSIRDREKQDQYKMPLKEFLNMVESKMQEVSF.

The tract at residues 218-509 (DHRKLGVELG…LSEHFGGNFP (292 aa)) is catalytic. Residues C310, H361, and H486 each contribute to the Zn(2+) site.

This sequence belongs to the class-II aminoacyl-tRNA synthetase family. Homodimer. Requires Zn(2+) as cofactor.

Its subcellular location is the cytoplasm. The catalysed reaction is tRNA(Thr) + L-threonine + ATP = L-threonyl-tRNA(Thr) + AMP + diphosphate + H(+). Its function is as follows. Catalyzes the attachment of threonine to tRNA(Thr) in a two-step reaction: L-threonine is first activated by ATP to form Thr-AMP and then transferred to the acceptor end of tRNA(Thr). Also edits incorrectly charged L-seryl-tRNA(Thr). The protein is Threonine--tRNA ligase of Helicobacter pylori (strain ATCC 700392 / 26695) (Campylobacter pylori).